The primary structure comprises 199 residues: Imidazole glycerol phosphate synthase subunit HisH 2 (199 aa).

The Glutamine amidotransferase type-1 domain maps to 1–199 (MIAVIDVSGN…NNFLSLESTC (199 aa)). Cys76 acts as the Nucleophile in catalysis. Active-site residues include His177 and Glu179.

In terms of assembly, heterodimer of HisH and HisF.

It localises to the cytoplasm. It catalyses the reaction 5-[(5-phospho-1-deoxy-D-ribulos-1-ylimino)methylamino]-1-(5-phospho-beta-D-ribosyl)imidazole-4-carboxamide + L-glutamine = D-erythro-1-(imidazol-4-yl)glycerol 3-phosphate + 5-amino-1-(5-phospho-beta-D-ribosyl)imidazole-4-carboxamide + L-glutamate + H(+). The enzyme catalyses L-glutamine + H2O = L-glutamate + NH4(+). Its pathway is amino-acid biosynthesis; L-histidine biosynthesis; L-histidine from 5-phospho-alpha-D-ribose 1-diphosphate: step 5/9. In terms of biological role, IGPS catalyzes the conversion of PRFAR and glutamine to IGP, AICAR and glutamate. The HisH subunit provides the glutamine amidotransferase activity that produces the ammonia necessary to HisF for the synthesis of IGP and AICAR. The sequence is that of Imidazole glycerol phosphate synthase subunit HisH 2 from Legionella pneumophila subsp. pneumophila (strain Philadelphia 1 / ATCC 33152 / DSM 7513).